The sequence spans 286 residues: Aminoglycoside N(3)-acetyltransferase III (286 aa).

This sequence belongs to the antibiotic N-acetyltransferase family.

The catalysed reaction is a 2-deoxystreptamine antibiotic + acetyl-CoA = an N(3)-acetyl-2-deoxystreptamine antibiotic + CoA + H(+). Its function is as follows. Resistance to antibiotics containing the 2-deoxy-streptamine ring including gentamicin, kanamycin, tobramycin, neomycin and apramycin. The polypeptide is Aminoglycoside N(3)-acetyltransferase III (aacC3) (Salmonella sp).